The following is a 132-amino-acid chain: Fatty acid-binding protein, adipocyte (132 aa).

The residue at position 2 (Cys-2) is an N-acetylcysteine. Ser-13 is modified (phosphoserine). Tyr-20 bears the Phosphotyrosine; by Tyr-kinases mark. The Nuclear localization signal signature appears at 22-32 (KEVGVGFATRK). 127–129 (RVY) is an a fatty acid binding site.

It belongs to the calycin superfamily. Fatty-acid binding protein (FABP) family. As to quaternary structure, monomer. Homodimer. Interacts with PPARG.

The protein localises to the cytoplasm. The protein resides in the nucleus. Functionally, lipid transport protein in adipocytes. Binds both long chain fatty acids and retinoic acid. Delivers long-chain fatty acids and retinoic acid to their cognate receptors in the nucleus. The protein is Fatty acid-binding protein, adipocyte (Fabp4) of Mus musculus (Mouse).